The sequence spans 215 residues: ATP-dependent Clp protease proteolytic subunit (215 aa).

The active-site Nucleophile is the S115. H140 is an active-site residue.

The protein belongs to the peptidase S14 family. As to quaternary structure, fourteen ClpP subunits assemble into 2 heptameric rings which stack back to back to give a disk-like structure with a central cavity, resembling the structure of eukaryotic proteasomes.

Its subcellular location is the cytoplasm. It catalyses the reaction Hydrolysis of proteins to small peptides in the presence of ATP and magnesium. alpha-casein is the usual test substrate. In the absence of ATP, only oligopeptides shorter than five residues are hydrolyzed (such as succinyl-Leu-Tyr-|-NHMec, and Leu-Tyr-Leu-|-Tyr-Trp, in which cleavage of the -Tyr-|-Leu- and -Tyr-|-Trp bonds also occurs).. Cleaves peptides in various proteins in a process that requires ATP hydrolysis. Has a chymotrypsin-like activity. Plays a major role in the degradation of misfolded proteins. The sequence is that of ATP-dependent Clp protease proteolytic subunit from Anaplasma marginale (strain Florida).